We begin with the raw amino-acid sequence, 39 residues long: Photosystem II reaction center protein J (39 aa).

Residues 9-29 (LWLVGLVGGFAVITIVSLFIY) traverse the membrane as a helical segment.

This sequence belongs to the PsbJ family. PSII is composed of 1 copy each of membrane proteins PsbA, PsbB, PsbC, PsbD, PsbE, PsbF, PsbH, PsbI, PsbJ, PsbK, PsbL, PsbM, PsbT, PsbX, PsbY, PsbZ, Psb30/Ycf12, at least 3 peripheral proteins of the oxygen-evolving complex and a large number of cofactors. It forms dimeric complexes.

It is found in the plastid. It localises to the chloroplast thylakoid membrane. In terms of biological role, one of the components of the core complex of photosystem II (PSII). PSII is a light-driven water:plastoquinone oxidoreductase that uses light energy to abstract electrons from H(2)O, generating O(2) and a proton gradient subsequently used for ATP formation. It consists of a core antenna complex that captures photons, and an electron transfer chain that converts photonic excitation into a charge separation. The protein is Photosystem II reaction center protein J of Thalassiosira pseudonana (Marine diatom).